The following is a 422-amino-acid chain: Zinc finger protein Gfi-1 (422 aa).

An SNAG domain region spans residues 1–20 (MPRSFLVKSKKAHSYHQPRS). Residues 1-107 (MPRSFLVKSK…SPASEKSVCP (107 aa)) form a disordered region. Ser-20 carries the phosphoserine modification. Residues 34 to 47 (APGGADGTSSAGGA) are compositionally biased toward low complexity. Ser-56 carries the post-translational modification Phosphoserine. Positions 57–72 (PESQLTEAPDRSSASP) are enriched in polar residues. Residues 140-257 (RPCAALDRGA…LLLGGGSYKC (118 aa)) are required for interaction with RELA. 6 consecutive C2H2-type zinc fingers follow at residues 255–278 (YKCIKCSKVFSTPHGLEVHVRRSH), 284–306 (FACEMCGKTFGHAVSLEQHKAVH), 312–334 (FDCKICGKSFKRSSTLSTHLLIH), 340–362 (YPCQYCGKRFHQKSDMKKHTFIH), 368–390 (HKCQVCGKAFSQSSNLITHSRKH), and 396–419 (FGCDLCGKGFQRKVDLRRHRETQH).

Interacts with U2AF1L4. Component of RCOR-GFI-KDM1A-HDAC complexes. Interacts directly with RCOR1, KDM1A and HDAC2. Also interacts with HDAC1 and HDAC3. Interacts (via the zinc-finger domain) with ARIH2; the interaction prevents GFI1 ubiquitination and proteasomal degradation. Interacts with PIAS3; the interaction relieves the inhibitory effect of PIAS3 on STAT3-mediated transcriptional activity. Forms a complex with EHMT2 and HDAC1 to promote 'Lys-9' dimethylation of H3 (H3K9Me2) and repress expression of target genes. Interacts directly with EHMT2. Component of the GFI1-AJUBA-HDAC1 repressor complex. Interacts directly with AJUBA (via ITS LIM domains); the interaction results in the HDAC-dependent corepression of a subset of GFI1 target genes and, occurs independently of the SNAG domain. Interacts with SPI1; the interaction inhibits SPI1 transcriptional activity targeted at macrophage-specific genes, repressing macrophage differentiation of myeloid progenitor cells and promoting granulocyte commitment. Interacts with RUNX1T1; the interaction represses HDAC-mediated transcriptional activity. Interacts with RELA; the interaction occurs on liposaccharide (LPS) stimulation and controls RELA DNA binding activity and regulates endotoxin-mediated TOLL-like receptor inflammatory response. Interacts (via the C-terminal zinc fingers) with ZBTB17; the interaction results in the recruitment of GFI1 to the CDKN1A/p21 and CDKNIB promoters and repression of transcription. Post-translationally, ubiquitinated.

It is found in the nucleus. Its function is as follows. Transcription repressor essential for hematopoiesis. Functions in a cell-context and development-specific manner. Binds to 5'-TAAATCAC[AT]GCA-3' in the promoter region of a large number of genes. Component of several complexes, including the EHMT2-GFI1-HDAC1, AJUBA-GFI1-HDAC1 and RCOR-GFI-KDM1A-HDAC complexes, that suppress, via histone deacetylase (HDAC) recruitment, a number of genes implicated in multilineage blood cell development. Regulates neutrophil differentiation, promotes proliferation of lymphoid cells, and is required for granulocyte development. Inhibits SPI1 transcriptional activity at macrophage-specific genes, repressing macrophage differentiation of myeloid progenitor cells and promoting granulocyte commitment. Mediates, together with U2AF1L4, the alternative splicing of CD45 and controls T-cell receptor signaling. Regulates the endotoxin-mediated Toll-like receptor (TLR) inflammatory response by antagonizing RELA. Cooperates with CBFA2T2 to regulate ITGB1-dependent neurite growth. Controls cell-cycle progression by repressing CDKNIA/p21 transcription in response to TGFB1 via recruitment of GFI1 by ZBTB17 to the CDKNIA/p21 and CDKNIB promoters. Required for the maintenance of inner ear hair cells. In addition to its role in transcription, acts as a substrate adapter for PRMT1 in the DNA damage response: facilitates the recognition of TP53BP1 and MRE11 substrates by PRMT1, promoting their methylation and the DNA damage response. In Canis lupus familiaris (Dog), this protein is Zinc finger protein Gfi-1 (GFI1).